Reading from the N-terminus, the 477-residue chain is tRNA(Ile)-lysidine synthase (477 aa).

ATP is bound at residue 36–41; that stretch reads SGGADS.

Belongs to the tRNA(Ile)-lysidine synthase family.

The protein resides in the cytoplasm. The enzyme catalyses cytidine(34) in tRNA(Ile2) + L-lysine + ATP = lysidine(34) in tRNA(Ile2) + AMP + diphosphate + H(+). In terms of biological role, ligates lysine onto the cytidine present at position 34 of the AUA codon-specific tRNA(Ile) that contains the anticodon CAU, in an ATP-dependent manner. Cytidine is converted to lysidine, thus changing the amino acid specificity of the tRNA from methionine to isoleucine. The sequence is that of tRNA(Ile)-lysidine synthase from Treponema pallidum (strain Nichols).